The chain runs to 317 residues: Actin-related protein 2/3 complex subunit 2 (317 aa).

The protein belongs to the ARPC2 family. As to quaternary structure, component of the Arp2/3 complex composed of arp2, act2, arc1/p41-ARC, arc2/p34-ARC, arc3/p21-ARC, arc4/p20-ARC and arc5/p16-ARC.

It localises to the cytoplasm. Its subcellular location is the cytoskeleton. It is found in the actin patch. In terms of biological role, functions as actin-binding component of the Arp2/3 complex which is involved in regulation of actin polymerization and together with an activating nucleation-promoting factor (NPF) mediates the formation of branched actin networks. Seems to contact the mother actin filament. The sequence is that of Actin-related protein 2/3 complex subunit 2 (arc2) from Schizosaccharomyces pombe (strain 972 / ATCC 24843) (Fission yeast).